We begin with the raw amino-acid sequence, 196 residues long: MPIGVPKVPFRSPGEGDTSWVDIYNRLYRERLFFLGQEVDTEISNQLISLMIYLSIEKDTKDLYLFINSPGGWVISGMAIYDTMQFVRPDVQTICMGLAASIASFILVGGAITKRIAFPHARVMIHQPASSFYEAQTGEFILEAEELLKLRETITRVYVQRTGKPIWVISEDMERDVFMSATEAQAYGIVDLVAVQ.

Serine 101 acts as the Nucleophile in catalysis. Residue histidine 126 is part of the active site.

It belongs to the peptidase S14 family. In terms of assembly, component of the chloroplastic Clp protease core complex which consist of at least 16 proteins: CLPP4 (3 copies), CLPP5 (3 copies), CLPR4 (2 copies), ClpP1 (1 copy), CLPP6 (1 copy), CLPR2 (1 copy), CLPT1 (1 copy), CLPT2 (1 copy) and 3 copies of CLPP3 and/or CLPR1 and/or CLPR3. The core complex is organized in two heptameric rings, one containing CLPP3,4,5,6 in a 1:2:3:1 ratio and the other CLPP1 and CLPR1,2,3,4 in a 3:1:1:1:1 ratio. As to expression, mostly expressed in leaves. Also detected in stems, and to a lower extent, in roots (at protein level).

Its subcellular location is the plastid. The protein localises to the chloroplast stroma. It carries out the reaction Hydrolysis of proteins to small peptides in the presence of ATP and magnesium. alpha-casein is the usual test substrate. In the absence of ATP, only oligopeptides shorter than five residues are hydrolyzed (such as succinyl-Leu-Tyr-|-NHMec, and Leu-Tyr-Leu-|-Tyr-Trp, in which cleavage of the -Tyr-|-Leu- and -Tyr-|-Trp bonds also occurs).. Functionally, cleaves peptides in various proteins in a process that requires ATP hydrolysis. Has a chymotrypsin-like activity. Plays a major role in the degradation of misfolded proteins. This Arabidopsis thaliana (Mouse-ear cress) protein is Chloroplastic ATP-dependent Clp protease proteolytic subunit 1.